A 206-amino-acid polypeptide reads, in one-letter code: Small ribosomal subunit protein uS4 (206 aa).

The S4 RNA-binding domain occupies Ser96–Lys156.

It belongs to the universal ribosomal protein uS4 family. Part of the 30S ribosomal subunit. Contacts protein S5. The interaction surface between S4 and S5 is involved in control of translational fidelity.

Functionally, one of the primary rRNA binding proteins, it binds directly to 16S rRNA where it nucleates assembly of the body of the 30S subunit. Its function is as follows. With S5 and S12 plays an important role in translational accuracy. This Buchnera aphidicola subsp. Acyrthosiphon pisum (strain 5A) protein is Small ribosomal subunit protein uS4.